We begin with the raw amino-acid sequence, 483 residues long: V-type proton ATPase subunit H (483 aa).

Ser-483 is subject to Phosphoserine.

The protein belongs to the V-ATPase H subunit family. V-ATPase is a heteromultimeric enzyme made up of two complexes: the ATP-hydrolytic V1 complex and the proton translocation V0 complex. The V1 complex consists of three catalytic AB heterodimers that form a heterohexamer, three peripheral stalks each consisting of EG heterodimers, one central rotor including subunits D and F, and the regulatory subunits C and H. The proton translocation complex V0 consists of the proton transport subunit a, a ring of proteolipid subunits c9c'', rotary subunit d, subunits e and f, and the accessory subunits ATP6AP1/Ac45 and ATP6AP2/PRR. Interacts with AP2M1. Interacts with TM9SF4 in colon cancer cells. In terms of assembly, (Microbial infection) Interacts with HIV-1 Nef protein. As to quaternary structure, (Microbial infection) Interacts with M.tuberculosis PtpA, which blocks V-ATPase trafficking and phagosome acidification. As to expression, widely expressed.

Its subcellular location is the cytoplasmic vesicle. It is found in the clathrin-coated vesicle membrane. Functionally, subunit of the V1 complex of vacuolar(H+)-ATPase (V-ATPase), a multisubunit enzyme composed of a peripheral complex (V1) that hydrolyzes ATP and a membrane integral complex (V0) that translocates protons. V-ATPase is responsible for acidifying and maintaining the pH of intracellular compartments and in some cell types, is targeted to the plasma membrane, where it is responsible for acidifying the extracellular environment. Subunit H is essential for V-ATPase activity, but not for the assembly of the complex. Involved in the endocytosis mediated by clathrin-coated pits, required for the formation of endosomes. This chain is V-type proton ATPase subunit H (ATP6V1H), found in Homo sapiens (Human).